The sequence spans 274 residues: Acyl-coenzyme A diphosphatase YFT2 (274 aa).

Topologically, residues 1–11 (MIRQLNYWSRK) are cytoplasmic. Residues 12 to 32 (AYLIYPFQVFVGALLSIVVSS) form a helical membrane-spanning segment. Over 33-60 (ETLNHQKETCALLKSSNIFNVIFAYKAN) the chain is Lumenal. The helical transmembrane segment at 61–81 (QLWPFLFFSLAFLQIYFHYLA) threads the bilayer. The Cytoplasmic portion of the chain corresponds to 82–124 (RMDILPLPISSTETSSSYLTYTNHWPLLKNRIISIMITQYACK). The chain crosses the membrane as a helical span at residues 125–145 (FVLKYLLLFLNFQFIDHVFIW). Residues 146-170 (TGGECSSGSKTTSAEKCRLENGKWD) lie on the Lumenal side of the membrane. A helical transmembrane segment spans residues 171-191 (GGFDISGHFCFLVSISMILWM). Histidine 178 is a catalytic residue. Residues 192–215 (ELHLFSRFVQAEDMFWVVNKWVRA) are Cytoplasmic-facing. A helical transmembrane segment spans residues 216–236 (CLAIVCAVLVIWICILWVTAI). Over 237-247 (YYHTILEKVLG) the chain is Lumenal. The active site involves histidine 239. A helical membrane pass occupies residues 248–268 (CLMGFICPVFIYHILPKIGIL). Residues 269 to 274 (HNYLYL) are Cytoplasmic-facing.

The protein belongs to the FIT family. Yeast FIT2A/YFT2 subfamily.

It is found in the endoplasmic reticulum membrane. The protein resides in the vacuole. The catalysed reaction is an acyl-CoA + H2O = an acyl-4'-phosphopantetheine + adenosine 3',5'-bisphosphate + 2 H(+). The enzyme catalyses (9Z)-octadecenoyl-CoA + H2O = S-(9Z-octadecenoyl)-4'-phosphopantetheine + adenosine 3',5'-bisphosphate + 2 H(+). It carries out the reaction (5Z,8Z,11Z,14Z)-eicosatetraenoyl-CoA + H2O = S-(5Z,8Z,11Z,14Z-eicosatetraenoyl)-4'-phosphopantetheine + adenosine 3',5'-bisphosphate + 2 H(+). It catalyses the reaction hexadecanoyl-CoA + H2O = S-hexadecanoyl-4'-phosphopantetheine + adenosine 3',5'-bisphosphate + 2 H(+). Fatty acyl-coenzyme A (CoA) diphosphatase that hydrolyzes fatty acyl-CoA to yield acyl-4'-phosphopantetheine and adenosine 3',5'-bisphosphate. Preferentially hydrolyzes unsaturated long-chain acyl-CoA substrates in the endoplasmic reticulum (ER) lumen. This catalytic activity is required for maintaining ER structure and for lipid droplets (LDs) biogenesis, which are lipid storage organelles involved in maintaining lipid and energy homeostasis. May directly bind to diacylglycerol (DAGs) and triacylglycerol, which is also important for LD biogenesis. May support directional budding of nacent LDs from the ER into the cytosol by reducing DAG levels at sites of LD formation. May play a role in the regulation of cell morphology and cytoskeletal organization. Involved in phospholipid biosynthesis. The polypeptide is Acyl-coenzyme A diphosphatase YFT2 (Saccharomyces cerevisiae (strain ATCC 204508 / S288c) (Baker's yeast)).